Here is an 892-residue protein sequence, read N- to C-terminus: Putative VWFA domain-containing protein ORF892 (892 aa).

Positions 109-548 (EEQLQRRPQR…RGYAHGDEDL (440 aa)) are disordered. A compositionally biased stretch (polar residues) spans 129-142 (SEVANQRVSRSAEN). A compositionally biased stretch (basic and acidic residues) spans 143–162 (QGKRGNEEKQQQKTPGKTEE). Positions 169-184 (ESGEEGNQQEESGEEQ) are enriched in acidic residues. Basic and acidic residues predominate over residues 185-196 (EGVKGSRSKQRE). Positions 212 to 223 (ESGESESEEGQS) are enriched in acidic residues. Low complexity-rich tracts occupy residues 224–238 (SEET…GNQQ) and 271–283 (GNGQ…AQNG). Positions 287–300 (GESEGEITESESAS) are enriched in acidic residues. The segment covering 301–323 (EEQTGSKGKSGQQGEEGQQQSGS) has biased composition (low complexity). Composition is skewed to acidic residues over residues 324-336 (EGEE…ESGE) and 425-448 (SESE…ETEE). The segment covering 453 to 466 (SEAEGTAAEGEVGQ) has biased composition (low complexity). Polar residues-rich tracts occupy residues 467–481 (PSEQ…SGQR) and 512–531 (QTGS…QQGE). The span at 536–546 (EGGRGYAHGDE) shows a compositional bias: basic and acidic residues. The stretch at 553–620 (QEINSILQTL…VQKLLKDLNV (68 aa)) forms a coiled coil. Residues 723–892 (DFLFVIDSSG…GNIVLKRLVH (170 aa)) form the VWFA domain.

This Acidianus two-tailed virus (ATV) protein is Putative VWFA domain-containing protein ORF892.